A 317-amino-acid polypeptide reads, in one-letter code: Olfactory receptor 1B1 (317 aa).

Residues 1 to 29 lie on the Extracellular side of the membrane; sequence MSFAPNASHSPVFLLLGFSRANISYTLLF. 2 N-linked (GlcNAc...) asparagine glycosylation sites follow: asparagine 6 and asparagine 22. The chain crosses the membrane as a helical span at residues 30 to 50; the sequence is FLFLAIYLTTILGNVTLVLLI. Residues 51–66 lie on the Cytoplasmic side of the membrane; the sequence is SWDSRLHSPMYYLLRG. A helical transmembrane segment spans residues 67–87; that stretch reads LSVIDMGLSTVTLPQLLAHLV. Residues 88–98 lie on the Extracellular side of the membrane; it reads SHYPTIPAARC. Residues cysteine 98 and cysteine 184 are joined by a disulfide bond. Residues 99–119 traverse the membrane as a helical segment; the sequence is LAQFFFFYAFGVTDTLVIAVM. Residues 120-144 lie on the Cytoplasmic side of the membrane; sequence ALDRYVAICDPLHYALVMNHQRCAC. A helical transmembrane segment spans residues 145 to 165; it reads LLALSWVVSILHTMLRVGLVL. Topologically, residues 166-201 are extracellular; the sequence is PLCWTGDAGGNVNLPHFFCDHRPLLRASCSDIHSNE. Residues 202–222 traverse the membrane as a helical segment; it reads LAIFFEGGFLMLGPCALIVLS. Residues 223–248 lie on the Cytoplasmic side of the membrane; that stretch reads YVRIGAAILRLPSAAGRRRAVSTCGS. A helical transmembrane segment spans residues 249–269; it reads HLTMVGFLYGTIICVYFQPPF. Over 270–276 the chain is Extracellular; sequence QNSQYQD. Residues 277–297 form a helical membrane-spanning segment; sequence MVASVMYTAITPLANPFVYSL. Over 298–317 the chain is Cytoplasmic; the sequence is HNKDVKGALCRLLEWVKVDP.

It belongs to the G-protein coupled receptor 1 family.

It is found in the cell membrane. In terms of biological role, odorant receptor. The chain is Olfactory receptor 1B1 (OR1B1) from Homo sapiens (Human).